The following is a 602-amino-acid chain: Elongation factor 4 (602 aa).

A tr-type G domain is found at 7-189; sequence ARLRNFCIIA…SVVDRIPPPK (183 aa). Residues 19–24 and 136–139 contribute to the GTP site; these read DHGKST and NKVD.

Belongs to the TRAFAC class translation factor GTPase superfamily. Classic translation factor GTPase family. LepA subfamily.

The protein localises to the cell inner membrane. The catalysed reaction is GTP + H2O = GDP + phosphate + H(+). Functionally, required for accurate and efficient protein synthesis under certain stress conditions. May act as a fidelity factor of the translation reaction, by catalyzing a one-codon backward translocation of tRNAs on improperly translocated ribosomes. Back-translocation proceeds from a post-translocation (POST) complex to a pre-translocation (PRE) complex, thus giving elongation factor G a second chance to translocate the tRNAs correctly. Binds to ribosomes in a GTP-dependent manner. This chain is Elongation factor 4, found in Prochlorococcus marinus (strain SARG / CCMP1375 / SS120).